Reading from the N-terminus, the 233-residue chain is Large ribosomal subunit protein bL25 (233 aa).

The tract at residues 1-23 is disordered; sequence MATVRELKATARPKSGKGAARAE.

Belongs to the bacterial ribosomal protein bL25 family. CTC subfamily. In terms of assembly, part of the 50S ribosomal subunit; part of the 5S rRNA/L5/L18/L25 subcomplex. Contacts the 5S rRNA. Binds to the 5S rRNA independently of L5 and L18.

In terms of biological role, this is one of the proteins that binds to the 5S RNA in the ribosome where it forms part of the central protuberance. The protein is Large ribosomal subunit protein bL25 of Nitrobacter hamburgensis (strain DSM 10229 / NCIMB 13809 / X14).